We begin with the raw amino-acid sequence, 419 residues long: Tyrosine--tRNA ligase 2 (419 aa).

Y34 is an L-tyrosine binding site. The short motif at 39-48 (PTGDSMHIGH) is the 'HIGH' region element. L-tyrosine-binding residues include Y168 and Q172. Residues 230 to 234 (KFGKS) carry the 'KMSKS' region motif. K233 lines the ATP pocket. The region spanning 352–418 (KNIVEWLVDL…GKKNYSLVKL (67 aa)) is the S4 RNA-binding domain.

The protein belongs to the class-I aminoacyl-tRNA synthetase family. TyrS type 1 subfamily. Homodimer.

It is found in the cytoplasm. It catalyses the reaction tRNA(Tyr) + L-tyrosine + ATP = L-tyrosyl-tRNA(Tyr) + AMP + diphosphate + H(+). In terms of biological role, catalyzes the attachment of tyrosine to tRNA(Tyr) in a two-step reaction: tyrosine is first activated by ATP to form Tyr-AMP and then transferred to the acceptor end of tRNA(Tyr). The protein is Tyrosine--tRNA ligase 2 of Bacillus thuringiensis subsp. konkukian (strain 97-27).